A 475-amino-acid polypeptide reads, in one-letter code: Aspartyl/glutamyl-tRNA(Asn/Gln) amidotransferase subunit B (475 aa).

This sequence belongs to the GatB/GatE family. GatB subfamily. Heterotrimer of A, B and C subunits.

The catalysed reaction is L-glutamyl-tRNA(Gln) + L-glutamine + ATP + H2O = L-glutaminyl-tRNA(Gln) + L-glutamate + ADP + phosphate + H(+). It catalyses the reaction L-aspartyl-tRNA(Asn) + L-glutamine + ATP + H2O = L-asparaginyl-tRNA(Asn) + L-glutamate + ADP + phosphate + 2 H(+). In terms of biological role, allows the formation of correctly charged Asn-tRNA(Asn) or Gln-tRNA(Gln) through the transamidation of misacylated Asp-tRNA(Asn) or Glu-tRNA(Gln) in organisms which lack either or both of asparaginyl-tRNA or glutaminyl-tRNA synthetases. The reaction takes place in the presence of glutamine and ATP through an activated phospho-Asp-tRNA(Asn) or phospho-Glu-tRNA(Gln). The polypeptide is Aspartyl/glutamyl-tRNA(Asn/Gln) amidotransferase subunit B (Chlorobium phaeobacteroides (strain DSM 266 / SMG 266 / 2430)).